Consider the following 416-residue polypeptide: Gamma-glutamyl phosphate reductase (416 aa).

The protein belongs to the gamma-glutamyl phosphate reductase family.

Its subcellular location is the cytoplasm. The enzyme catalyses L-glutamate 5-semialdehyde + phosphate + NADP(+) = L-glutamyl 5-phosphate + NADPH + H(+). Its pathway is amino-acid biosynthesis; L-proline biosynthesis; L-glutamate 5-semialdehyde from L-glutamate: step 2/2. In terms of biological role, catalyzes the NADPH-dependent reduction of L-glutamate 5-phosphate into L-glutamate 5-semialdehyde and phosphate. The product spontaneously undergoes cyclization to form 1-pyrroline-5-carboxylate. This is Gamma-glutamyl phosphate reductase from Actinobacillus succinogenes (strain ATCC 55618 / DSM 22257 / CCUG 43843 / 130Z).